The chain runs to 415 residues: 3-isopropylmalate dehydratase large subunit (415 aa).

The [4Fe-4S] cluster site is built by C297, C355, and C358.

This sequence belongs to the aconitase/IPM isomerase family. LeuC type 2 subfamily. As to quaternary structure, heterodimer of LeuC and LeuD. [4Fe-4S] cluster is required as a cofactor.

It catalyses the reaction (2R,3S)-3-isopropylmalate = (2S)-2-isopropylmalate. Its pathway is amino-acid biosynthesis; L-leucine biosynthesis; L-leucine from 3-methyl-2-oxobutanoate: step 2/4. Its function is as follows. Catalyzes the isomerization between 2-isopropylmalate and 3-isopropylmalate, via the formation of 2-isopropylmaleate. The polypeptide is 3-isopropylmalate dehydratase large subunit (Sulfurisphaera tokodaii (strain DSM 16993 / JCM 10545 / NBRC 100140 / 7) (Sulfolobus tokodaii)).